The chain runs to 320 residues: Ferrochelatase (320 aa).

The Fe cation site is built by histidine 194 and glutamate 275.

The protein belongs to the ferrochelatase family.

Its subcellular location is the cytoplasm. The enzyme catalyses heme b + 2 H(+) = protoporphyrin IX + Fe(2+). It participates in porphyrin-containing compound metabolism; protoheme biosynthesis; protoheme from protoporphyrin-IX: step 1/1. Functionally, catalyzes the ferrous insertion into protoporphyrin IX. This Serratia proteamaculans (strain 568) protein is Ferrochelatase.